Consider the following 321-residue polypeptide: Small ribosomal subunit protein mS43 (321 aa).

The transit peptide at Met1–Tyr13 directs the protein to the mitochondrion.

This sequence belongs to the mitochondrion-specific ribosomal protein mS43 family. Component of the mitochondrial small ribosomal subunit (mt-SSU). Mature yeast 74S mitochondrial ribosomes consist of a small (37S) and a large (54S) subunit. The 37S small subunit contains a 15S ribosomal RNA (15S mt-rRNA) and 34 different proteins. The 54S large subunit contains a 21S rRNA (21S mt-rRNA) and 46 different proteins. mS43 forms a heterodimer with mS42, building a large protuberance adjacent to the mRNA channel exit in the mt-SSU body.

It is found in the mitochondrion. In terms of biological role, component of the mitochondrial ribosome (mitoribosome), a dedicated translation machinery responsible for the synthesis of mitochondrial genome-encoded proteins, including at least some of the essential transmembrane subunits of the mitochondrial respiratory chain. The mitoribosomes are attached to the mitochondrial inner membrane and translation products are cotranslationally integrated into the membrane. The sequence is that of Small ribosomal subunit protein mS43 (MRP1) from Saccharomyces cerevisiae (strain ATCC 204508 / S288c) (Baker's yeast).